The sequence spans 95 residues: Co-chaperonin GroES (95 aa).

This sequence belongs to the GroES chaperonin family. Heptamer of 7 subunits arranged in a ring. Interacts with the chaperonin GroEL.

Its subcellular location is the cytoplasm. Functionally, together with the chaperonin GroEL, plays an essential role in assisting protein folding. The GroEL-GroES system forms a nano-cage that allows encapsulation of the non-native substrate proteins and provides a physical environment optimized to promote and accelerate protein folding. GroES binds to the apical surface of the GroEL ring, thereby capping the opening of the GroEL channel. The protein is Co-chaperonin GroES of Zymomonas mobilis subsp. mobilis (strain ATCC 31821 / ZM4 / CP4).